Consider the following 555-residue polypeptide: MSEAEARPTNFIRQIIDEDLASGKHTTVHTRFPPEPNGYLHIGHAKSICLNFGIAQDYQGQCNLRFDDTNPVKEDIEYVDSIKNDVEWLGFHWSGDIRYSSDYFDQLHAYAVELINKGLAYVDELTPEQIREYRGTLTAPGKNSPFRDRSVEENLALFEKMRTGGFEEGKACLRAKIDMASPFIVMRDPVLYRIKFAEHHQTGTKWCIYPMYDFTHCISDALEGITHSLCTLEFQDNRRLYDWVLDNITIPVHPRQYEFSRLNLEYTVMSKRKLNLLVTDKHVEGWDDPRMPTISGLRRRGYTAASIREFCKRIGVTKQDNTIEMASLESCIREDLNENAPRAMAVIDPVKLVIENYPQGESEMVTMPNHPNKPEMGSREVPFSGEIWIDRADFREEANKQYKRLVMGKEVRLRNAYVIKAERVEKDAEGNITTIFCTYDADTLSKDPADGRKVKGVIHWVSAAHALPIEIRLYDRLFSVPNPGAAEDFLSVINPESLVIKQGYGEPSLKAAVAGKAFQFEREGYFCLDSRYATADKLVFNRTVGLRDTWAKAGE.

Positions 34 to 44 match the 'HIGH' region motif; sequence PEPNGYLHIGH. ATP is bound by residues 35–37 and 41–47; these read EPN and HIGHAKS. L-glutamine is bound by residues D67 and Y212. ATP-binding positions include T231, 261–262, and 269–271; these read RL and MSK. A 'KMSKS' region motif is present at residues 268–272; that stretch reads VMSKR. The tract at residues 317 to 324 is interaction with tRNA; sequence TKQDNTIE.

It belongs to the class-I aminoacyl-tRNA synthetase family. Monomer.

The protein localises to the cytoplasm. The enzyme catalyses tRNA(Gln) + L-glutamine + ATP = L-glutaminyl-tRNA(Gln) + AMP + diphosphate. The sequence is that of Glutamine--tRNA ligase from Salmonella schwarzengrund (strain CVM19633).